Reading from the N-terminus, the 242-residue chain is Probable transcriptional regulatory protein EF_0663 (242 aa).

Residues 1 to 14 are compositionally biased toward polar residues; that stretch reads MSGHSKWSNIQGRK. Residues 1–22 form a disordered region; the sequence is MSGHSKWSNIQGRKNAQDAKRG.

The protein belongs to the TACO1 family.

The protein localises to the cytoplasm. This chain is Probable transcriptional regulatory protein EF_0663, found in Enterococcus faecalis (strain ATCC 700802 / V583).